A 438-amino-acid chain; its full sequence is Cysteine--tRNA ligase (438 aa).

C28 provides a ligand contact to Zn(2+). A 'HIGH' region motif is present at residues 30–40 (PTVYNHLHLGN). Positions 207, 232, and 236 each coordinate Zn(2+). Positions 264 to 268 (KMSKS) match the 'KMSKS' region motif. K267 provides a ligand contact to ATP.

This sequence belongs to the class-I aminoacyl-tRNA synthetase family. As to quaternary structure, monomer. Requires Zn(2+) as cofactor.

The protein localises to the cytoplasm. The catalysed reaction is tRNA(Cys) + L-cysteine + ATP = L-cysteinyl-tRNA(Cys) + AMP + diphosphate. The chain is Cysteine--tRNA ligase from Aster yellows witches'-broom phytoplasma (strain AYWB).